A 324-amino-acid chain; its full sequence is tRNA N6-adenosine threonylcarbamoyltransferase (324 aa).

Positions 107, 111, and 127 each coordinate Fe cation. Substrate is bound by residues 127-131 (YVSGG), Asp-159, Gly-172, Glu-176, and Asn-257. Residue Asp-285 participates in Fe cation binding.

The protein belongs to the KAE1 / TsaD family. Monomer. Component of the KEOPS complex that consists of Kae1, Bud32, Cgi121 and Pcc1; the whole complex dimerizes. Requires Fe(2+) as cofactor.

It localises to the cytoplasm. It carries out the reaction L-threonylcarbamoyladenylate + adenosine(37) in tRNA = N(6)-L-threonylcarbamoyladenosine(37) in tRNA + AMP + H(+). Required for the formation of a threonylcarbamoyl group on adenosine at position 37 (t(6)A37) in tRNAs that read codons beginning with adenine. Is a component of the KEOPS complex that is probably involved in the transfer of the threonylcarbamoyl moiety of threonylcarbamoyl-AMP (TC-AMP) to the N6 group of A37. Kae1 likely plays a direct catalytic role in this reaction, but requires other protein(s) of the complex to fulfill this activity. In Thermococcus sibiricus (strain DSM 12597 / MM 739), this protein is tRNA N6-adenosine threonylcarbamoyltransferase.